Consider the following 187-residue polypeptide: Peptide deformylase (187 aa).

Positions 94 and 136 each coordinate Fe cation. Glu137 is an active-site residue. His140 is a Fe cation binding site.

The protein belongs to the polypeptide deformylase family. Fe(2+) is required as a cofactor.

It carries out the reaction N-terminal N-formyl-L-methionyl-[peptide] + H2O = N-terminal L-methionyl-[peptide] + formate. Its function is as follows. Removes the formyl group from the N-terminal Met of newly synthesized proteins. Requires at least a dipeptide for an efficient rate of reaction. N-terminal L-methionine is a prerequisite for activity but the enzyme has broad specificity at other positions. In Chlorobaculum tepidum (strain ATCC 49652 / DSM 12025 / NBRC 103806 / TLS) (Chlorobium tepidum), this protein is Peptide deformylase.